A 166-amino-acid chain; its full sequence is Protein FAM163B (166 aa).

A helical membrane pass occupies residues 6 to 26; it reads VVITGGILATVILLCIIAVLC. Ser-40 is subject to Phosphoserine.

Belongs to the FAM163 family.

Its subcellular location is the membrane. This Homo sapiens (Human) protein is Protein FAM163B (FAM163B).